We begin with the raw amino-acid sequence, 158 residues long: NADH-quinone oxidoreductase subunit B (158 aa).

Positions 37, 38, 102, and 132 each coordinate [4Fe-4S] cluster.

It belongs to the complex I 20 kDa subunit family. In terms of assembly, NDH-1 is composed of 14 different subunits. Subunits NuoB, C, D, E, F, and G constitute the peripheral sector of the complex. The cofactor is [4Fe-4S] cluster.

It is found in the cell inner membrane. It carries out the reaction a quinone + NADH + 5 H(+)(in) = a quinol + NAD(+) + 4 H(+)(out). Functionally, NDH-1 shuttles electrons from NADH, via FMN and iron-sulfur (Fe-S) centers, to quinones in the respiratory chain. Couples the redox reaction to proton translocation (for every two electrons transferred, four hydrogen ions are translocated across the cytoplasmic membrane), and thus conserves the redox energy in a proton gradient. This chain is NADH-quinone oxidoreductase subunit B, found in Bordetella parapertussis (strain 12822 / ATCC BAA-587 / NCTC 13253).